A 231-amino-acid chain; its full sequence is Large ribosomal subunit protein uL1 (231 aa).

It belongs to the universal ribosomal protein uL1 family. In terms of assembly, part of the 50S ribosomal subunit.

In terms of biological role, binds directly to 23S rRNA. The L1 stalk is quite mobile in the ribosome, and is involved in E site tRNA release. Its function is as follows. Protein L1 is also a translational repressor protein, it controls the translation of the L11 operon by binding to its mRNA. In Pseudomonas syringae pv. tomato (strain ATCC BAA-871 / DC3000), this protein is Large ribosomal subunit protein uL1.